The following is a 224-amino-acid chain: Glycerol-3-phosphate acyltransferase (224 aa).

The next 5 helical transmembrane spans lie at 14–34 (FFPLAATLLGYLIGSLSFAVI), 64–84 (TAAIVTLLLDAAKGWLPVMLV), 98–118 (MALVGLAAFIGHLYPVFFNFA), 127–147 (LGVLLGLSPILALATGATWLI), and 160–180 (LTAAVFVPVYYVFGDGMAWYL).

It belongs to the PlsY family. In terms of assembly, probably interacts with PlsX.

The protein localises to the cell inner membrane. The enzyme catalyses an acyl phosphate + sn-glycerol 3-phosphate = a 1-acyl-sn-glycero-3-phosphate + phosphate. The protein operates within lipid metabolism; phospholipid metabolism. In terms of biological role, catalyzes the transfer of an acyl group from acyl-phosphate (acyl-PO(4)) to glycerol-3-phosphate (G3P) to form lysophosphatidic acid (LPA). This enzyme utilizes acyl-phosphate as fatty acyl donor, but not acyl-CoA or acyl-ACP. This is Glycerol-3-phosphate acyltransferase from Albidiferax ferrireducens (strain ATCC BAA-621 / DSM 15236 / T118) (Rhodoferax ferrireducens).